The sequence spans 258 residues: C1q-related factor (258 aa).

Positions 1–16 (MLLVLVVLIPVLVSSG) are cleaved as a signal peptide. The tract at residues 39–117 (GPGAGARTDG…PGLPGAGGSG (79 aa)) is disordered. The segment covering 67–77 (GPQGKPGRTGK) has biased composition (low complexity). The 49-residue stretch at 67-115 (GPQGKPGRTGKPGPPGPPGDPGPPGPVGPPGEKGEPGKPGPPGLPGAGG) folds into the Collagen-like domain. Pro residues predominate over residues 78 to 95 (PGPPGPPGDPGPPGPVGP). The C1q domain maps to 125–258 (TTVPRVAFYA…TFSGFIIYSD (134 aa)).

In terms of assembly, interacts with ADGRB3. Forms heterooligomers with C1QL4, when proteins are coexpressed; this interaction does not occur after secretion. Expressed in brainstem.

Its subcellular location is the secreted. Functionally, may regulate the number of excitatory synapses that are formed on hippocampus neurons. Has no effect on inhibitory synapses. The chain is C1q-related factor (C1QL1) from Homo sapiens (Human).